The sequence spans 343 residues: Probable transcription factor MYB58 (343 aa).

The segment at 1-30 is disordered; that stretch reads MARAPGGVRRRSGRRGAGGGGAGGGGEALR. Residues 15–27 are compositionally biased toward gly residues; it reads RGAGGGGAGGGGE. 2 consecutive HTH myb-type domains span residues 26–78 and 79–134; these read GEAL…VNKL and RPNL…KRLA. 2 DNA-binding regions (H-T-H motif) span residues 54 to 77 and 107 to 130; these read WSSI…WVNK and WARI…STRQ. Disordered regions lie at residues 137–169, 219–238, and 307–343; these read LRGP…TATF, PPAD…PPPL, and DDLP…DDVL. The segment covering 157 to 169 has biased composition (polar residues); the sequence is PSSSSLDSQTATF. Pro residues predominate over residues 320-336; that stretch reads QPPPPPPPPPPPSPSPS.

The protein localises to the nucleus. Probable transcription factor. This Oryza sativa subsp. japonica (Rice) protein is Probable transcription factor MYB58.